Consider the following 345-residue polypeptide: Phosphoribosylformylglycinamidine cyclo-ligase (345 aa).

The protein belongs to the AIR synthase family.

The protein resides in the cytoplasm. The catalysed reaction is 2-formamido-N(1)-(5-O-phospho-beta-D-ribosyl)acetamidine + ATP = 5-amino-1-(5-phospho-beta-D-ribosyl)imidazole + ADP + phosphate + H(+). It functions in the pathway purine metabolism; IMP biosynthesis via de novo pathway; 5-amino-1-(5-phospho-D-ribosyl)imidazole from N(2)-formyl-N(1)-(5-phospho-D-ribosyl)glycinamide: step 2/2. This Bifidobacterium longum subsp. infantis (strain ATCC 15697 / DSM 20088 / JCM 1222 / NCTC 11817 / S12) protein is Phosphoribosylformylglycinamidine cyclo-ligase.